Reading from the N-terminus, the 243-residue chain is Uridylate kinase (243 aa).

18–21 (KLGG) is a binding site for ATP. G59 contributes to the UMP binding site. 2 residues coordinate ATP: G60 and R64. Residues D79 and 140-147 (MGMPYFST) each bind UMP. The ATP site is built by Y173 and D176.

This sequence belongs to the UMP kinase family. As to quaternary structure, homohexamer.

The protein localises to the cytoplasm. It carries out the reaction UMP + ATP = UDP + ADP. Its pathway is pyrimidine metabolism; CTP biosynthesis via de novo pathway; UDP from UMP (UMPK route): step 1/1. With respect to regulation, inhibited by UTP. Catalyzes the reversible phosphorylation of UMP to UDP. The protein is Uridylate kinase of Corynebacterium efficiens (strain DSM 44549 / YS-314 / AJ 12310 / JCM 11189 / NBRC 100395).